Reading from the N-terminus, the 226-residue chain is Lysosomal-associated transmembrane protein 4B (226 aa).

Transmembrane regions (helical) follow at residues Ile-26–Ala-46, Met-72–Gly-92, Trp-100–Ile-120, and Cys-153–Ile-173. Positions Pro-205–Pro-221 are required for NEDD4 interaction.

Belongs to the LAPTM4/LAPTM5 transporter family. In terms of assembly, homooligomer; upon reaching the lysosomes. Interacts with MCOLN1. Interacts with NEDD4; may play a role in the lysosomal sorting of LAPTM4B; enhances HGS association with NEDD4; mediates inhibition of EGFR degradation. Interacts with PIP5K1C; promotes SNX5 association with LAPTM4B; kinase activity of PIP5K1C is required; interaction is regulated by phosphatidylinositol 4,5-bisphosphate generated by PIP5K1C. Interacts with HGS; promotes HGS ubiquitination. Interacts with SNX5. Interacts with SLC3A2 and SLC7A5; recruits SLC3A2 and SLC7A5 to lysosomes to promote leucine uptake into these organelles and is required for mTORC1 activation. Interacts with LRRC32; decreases TGFB1 production in regulatory T cells. Interacts with BECN1; competes with EGFR for LAPTM4B binding; regulates EGFR activity. Interacts with EGFR; positively correlates with EGFR activation. Undergoes proteolytic cleavage following delivery to the lysosomes. Post-translationally, ubiquitinated by NEDD4.

It localises to the endomembrane system. The protein localises to the late endosome membrane. The protein resides in the cell membrane. It is found in the cell projection. Its subcellular location is the lysosome membrane. It localises to the endosome membrane. The protein localises to the endosome. The protein resides in the multivesicular body membrane. It is found in the multivesicular body lumen. Its function is as follows. Required for optimal lysosomal function. Blocks EGF-stimulated EGFR intraluminal sorting and degradation. Conversely by binding with the phosphatidylinositol 4,5-bisphosphate, regulates its PIP5K1C interaction, inhibits HGS ubiquitination and relieves LAPTM4B inhibition of EGFR degradation. Recruits SLC3A2 and SLC7A5 (the Leu transporter) to the lysosome, promoting entry of leucine and other essential amino acid (EAA) into the lysosome, stimulating activation of proton-transporting vacuolar (V)-ATPase protein pump (V-ATPase) and hence mTORC1 activation. Plays a role as negative regulator of TGFB1 production in regulatory T cells. Binds ceramide and facilitates its exit from late endosome in order to control cell death pathways. This chain is Lysosomal-associated transmembrane protein 4B, found in Macaca fascicularis (Crab-eating macaque).